An 824-amino-acid polypeptide reads, in one-letter code: Mucosa-associated lymphoid tissue lymphoma translocation protein 1 (824 aa).

Positions 1-27 (MSLLGDPLQALPPSAAPTGPLLAPPAG) are disordered. Serine 2 bears the N-acetylserine mark. Residues 11–27 (LPPSAAPTGPLLAPPAG) show a composition bias toward low complexity. A Death domain is found at 39 to 126 (RRLSELLDQA…EVLQLLSPPG (88 aa)). Ig-like C2-type domains are found at residues 125–201 (PGIK…FEFS) and 212–305 (PESF…KKVE). Serine 135 carries the post-translational modification Phosphoserine. Disulfide bonds link cysteine 147–cysteine 190 and cysteine 248–cysteine 290. The interval 348–562 (IGNMNYREHP…SLSEKRALTD (215 aa)) is caspase-like. The short motif at 369–376 (LTNLLRQL) is the Nuclear export signal element. Residues histidine 415 and cysteine 464 contribute to the active site.

Belongs to the peptidase C14B family. Homooligomer; forms oligomers which bind to TRAF6. Forms a complex with CARD14 and MALT1; resulting in the formation of a CBM (CARD14-BCL10-MALT1) complex. Forms a complex with CARD11 and MALT1; resulting in the formation of a CBM (CARD11-BCL10-MALT1) complex. Forms a complex with CARD9 and MALT1; resulting in the formation of a CBM (CARD9-BCL10-MALT1) complex. Highly expressed in peripheral blood mononuclear cells. Detected at lower levels in bone marrow, thymus and lymph node, and at very low levels in colon and lung.

Its subcellular location is the cytoplasm. The protein localises to the perinuclear region. The protein resides in the nucleus. Functionally, protease that enhances BCL10-induced activation: acts via formation of CBM complexes that channel adaptive and innate immune signaling downstream of CARD domain-containing proteins (CARD9, CARD11 and CARD14) to activate NF-kappa-B and MAP kinase p38 pathways which stimulate expression of genes encoding pro-inflammatory cytokines and chemokines. Mediates BCL10 cleavage: MALT1-dependent BCL10 cleavage plays an important role in T-cell antigen receptor-induced integrin adhesion. Involved in the induction of T helper 17 cells (Th17) differentiation. Cleaves RC3H1 and ZC3H12A in response to T-cell receptor (TCR) stimulation which releases their cooperatively repressed targets to promote Th17 cell differentiation. Also mediates cleavage of N4BP1 in T-cells following TCR-mediated activation, leading to N4BP1 inactivation. May also have ubiquitin ligase activity: binds to TRAF6, inducing TRAF6 oligomerization and activation of its ligase activity. In Homo sapiens (Human), this protein is Mucosa-associated lymphoid tissue lymphoma translocation protein 1.